The sequence spans 857 residues: DNA mismatch repair protein MutS (857 aa).

613–620 (GPNMGGKS) lines the ATP pocket. The tract at residues 797 to 820 (TSLPHEQPAAHKAKDAPQVPHQSD) is disordered.

The protein belongs to the DNA mismatch repair MutS family.

Its function is as follows. This protein is involved in the repair of mismatches in DNA. It is possible that it carries out the mismatch recognition step. This protein has a weak ATPase activity. The sequence is that of DNA mismatch repair protein MutS from Pseudomonas putida (strain ATCC 47054 / DSM 6125 / CFBP 8728 / NCIMB 11950 / KT2440).